The primary structure comprises 115 residues: MVAAKKTKKSLESINSRLQLVMKSGKYVLGYKQTLKMIRQGKAKLVILANNCPALRKSEIEYYAMLAKTGVHHYSGNNIELGTACGKYYRVCTLAIIDPGDSDIIRSMPEQTSEK.

It belongs to the eukaryotic ribosomal protein eL30 family. In terms of assembly, component of the large ribosomal subunit.

Its subcellular location is the cytoplasm. Its function is as follows. Component of the large ribosomal subunit. The ribosome is a large ribonucleoprotein complex responsible for the synthesis of proteins in the cell. This chain is Large ribosomal subunit protein eL30 (RPL30), found in Gallus gallus (Chicken).